A 237-amino-acid chain; its full sequence is Pyridoxal phosphate homeostasis protein (237 aa).

An N6-(pyridoxal phosphate)lysine modification is found at Lys-31.

Belongs to the pyridoxal phosphate-binding protein YggS/PROSC family.

The protein resides in the cytoplasm. It is found in the nucleus. Its function is as follows. Pyridoxal 5'-phosphate (PLP)-binding protein, which may be involved in intracellular homeostatic regulation of pyridoxal 5'-phosphate (PLP), the active form of vitamin B6. The chain is Pyridoxal phosphate homeostasis protein from Schizosaccharomyces pombe (strain 972 / ATCC 24843) (Fission yeast).